Reading from the N-terminus, the 1070-residue chain is DNA-directed RNA polymerase subunit beta (1070 aa).

This sequence belongs to the RNA polymerase beta chain family. In plastids the minimal PEP RNA polymerase catalytic core is composed of four subunits: alpha, beta, beta', and beta''. When a (nuclear-encoded) sigma factor is associated with the core the holoenzyme is formed, which can initiate transcription.

It is found in the plastid. The protein resides in the chloroplast. It carries out the reaction RNA(n) + a ribonucleoside 5'-triphosphate = RNA(n+1) + diphosphate. In terms of biological role, DNA-dependent RNA polymerase catalyzes the transcription of DNA into RNA using the four ribonucleoside triphosphates as substrates. This is DNA-directed RNA polymerase subunit beta from Cucumis sativus (Cucumber).